Consider the following 38-residue polypeptide: Large ribosomal subunit protein bL36 (38 aa).

The protein belongs to the bacterial ribosomal protein bL36 family.

The chain is Large ribosomal subunit protein bL36 from Lacticaseibacillus casei (strain BL23) (Lactobacillus casei).